The chain runs to 169 residues: Cysteine synthase B (169 aa).

Lys-45 carries the post-translational modification N6-(pyridoxal phosphate)lysine. Asn-75 lines the pyridoxal 5'-phosphate pocket. The disordered stretch occupies residues 146-169 (ANGDNPEAHYTSTGPEIWRQTGGT).

The protein belongs to the cysteine synthase/cystathionine beta-synthase family. Requires pyridoxal 5'-phosphate as cofactor.

The enzyme catalyses O-acetyl-L-serine + hydrogen sulfide = L-cysteine + acetate. It participates in amino-acid biosynthesis; L-cysteine biosynthesis; L-cysteine from L-serine: step 2/2. This is Cysteine synthase B (cysM) from Pseudomonas syringae pv. syringae.